The sequence spans 218 residues: MPGLTIGDTIPDLEVDTTQGKIKLHHFCSDSWTILFSHPGDFTPVCTTELGKMAQYASEFNKRGVMLLGMSCDDLESHKEWIKDIEAHTPGAKVNYPIISDPKREIIKQLNMVDPDEKDSNGNLPSRALHIVGPDKKIKLSFLYPAQTGRNMDEVLRVVESLQKASKYKIATPANWKPGEPVVISPDVTNDQAKEMFPQGFKTADLPSKKEYLRFTNV.

The Thioredoxin domain occupies 4–164 (LTIGDTIPDL…VLRVVESLQK (161 aa)). Residue Cys46 is the Cysteine sulfenic acid (-SOH) intermediate of the active site. A Bipartite nuclear localization signal motif is present at residues 194–217 (KEMFPQGFKTADLPSKKEYLRFTN).

It belongs to the peroxiredoxin family. Prx6 subfamily.

It localises to the nucleus. It is found in the cytoplasm. It carries out the reaction a hydroperoxide + [thioredoxin]-dithiol = an alcohol + [thioredoxin]-disulfide + H2O. In terms of biological role, thiol-specific peroxidase that catalyzes the reduction of hydrogen peroxide and organic hydroperoxides to water and alcohols, respectively. Seems to contribute to the inhibition of germination during stress. The protein is 1-Cys peroxiredoxin of Medicago truncatula (Barrel medic).